The chain runs to 208 residues: 2,3-bisphosphoglycerate-dependent phosphoglycerate mutase (208 aa).

Substrate contacts are provided by residues 9–16, 22–23, Arg-61, 88–91, Lys-99, 115–116, and 159–160; these read RHGQSEWN, TG, ERDY, RR, and GN. Residue His-10 is the Tele-phosphohistidine intermediate of the active site. The Proton donor/acceptor role is filled by Glu-88.

The protein belongs to the phosphoglycerate mutase family. BPG-dependent PGAM subfamily. In terms of assembly, homodimer.

It carries out the reaction (2R)-2-phosphoglycerate = (2R)-3-phosphoglycerate. It functions in the pathway carbohydrate degradation; glycolysis; pyruvate from D-glyceraldehyde 3-phosphate: step 3/5. In terms of biological role, catalyzes the interconversion of 2-phosphoglycerate and 3-phosphoglycerate. In Methylobacterium sp. (strain 4-46), this protein is 2,3-bisphosphoglycerate-dependent phosphoglycerate mutase.